The chain runs to 309 residues: Homoserine kinase (309 aa).

95-105 (PQSRGLGSSAA) contributes to the ATP binding site.

Belongs to the GHMP kinase family. Homoserine kinase subfamily.

It is found in the cytoplasm. It carries out the reaction L-homoserine + ATP = O-phospho-L-homoserine + ADP + H(+). It participates in amino-acid biosynthesis; L-threonine biosynthesis; L-threonine from L-aspartate: step 4/5. In terms of biological role, catalyzes the ATP-dependent phosphorylation of L-homoserine to L-homoserine phosphate. The sequence is that of Homoserine kinase from Corynebacterium efficiens (strain DSM 44549 / YS-314 / AJ 12310 / JCM 11189 / NBRC 100395).